Reading from the N-terminus, the 497-residue chain is Probable cytosol aminopeptidase (497 aa).

Mn(2+) is bound by residues K263 and D268. Residue K275 is part of the active site. D286, D345, and E347 together coordinate Mn(2+). R349 is an active-site residue.

The protein belongs to the peptidase M17 family. Mn(2+) is required as a cofactor.

The protein localises to the cytoplasm. It carries out the reaction Release of an N-terminal amino acid, Xaa-|-Yaa-, in which Xaa is preferably Leu, but may be other amino acids including Pro although not Arg or Lys, and Yaa may be Pro. Amino acid amides and methyl esters are also readily hydrolyzed, but rates on arylamides are exceedingly low.. It catalyses the reaction Release of an N-terminal amino acid, preferentially leucine, but not glutamic or aspartic acids.. Presumably involved in the processing and regular turnover of intracellular proteins. Catalyzes the removal of unsubstituted N-terminal amino acids from various peptides. The polypeptide is Probable cytosol aminopeptidase (Methylorubrum populi (strain ATCC BAA-705 / NCIMB 13946 / BJ001) (Methylobacterium populi)).